The primary structure comprises 543 residues: Hydroxylamine reductase (543 aa).

The [4Fe-4S] cluster site is built by Cys-5, Cys-8, Cys-17, and Cys-23. Hybrid [4Fe-2O-2S] cluster contacts are provided by His-236, Glu-260, Cys-304, Cys-398, Cys-426, Cys-451, Glu-486, and Lys-488. Cys-398 carries the post-translational modification Cysteine persulfide.

Belongs to the HCP family. It depends on [4Fe-4S] cluster as a cofactor. The cofactor is hybrid [4Fe-2O-2S] cluster.

The protein resides in the cytoplasm. It catalyses the reaction A + NH4(+) + H2O = hydroxylamine + AH2 + H(+). Catalyzes the reduction of hydroxylamine to form NH(3) and H(2)O. In Bacteroides thetaiotaomicron (strain ATCC 29148 / DSM 2079 / JCM 5827 / CCUG 10774 / NCTC 10582 / VPI-5482 / E50), this protein is Hydroxylamine reductase.